A 489-amino-acid polypeptide reads, in one-letter code: GTPase Der (489 aa).

EngA-type G domains follow at residues 30-199 (PVVS…KDKP) and 227-403 (FRLA…SRSH). GTP contacts are provided by residues 36-43 (GRQNVGKS), 85-89 (DTPGL), 151-154 (NKAD), 233-240 (GKPNSGKS), 280-284 (DTAGI), and 345-348 (NKWD). Residues 404–488 (RKVSTSELNK…PIRLEFRSDR (85 aa)) enclose the KH-like domain.

It belongs to the TRAFAC class TrmE-Era-EngA-EngB-Septin-like GTPase superfamily. EngA (Der) GTPase family. Associates with the 50S ribosomal subunit.

Functionally, GTPase that plays an essential role in the late steps of ribosome biogenesis. The sequence is that of GTPase Der from Leptospira interrogans serogroup Icterohaemorrhagiae serovar copenhageni (strain Fiocruz L1-130).